The sequence spans 99 residues: Aspartyl/glutamyl-tRNA(Asn/Gln) amidotransferase subunit C (99 aa).

The protein belongs to the GatC family. In terms of assembly, heterotrimer of A, B and C subunits.

The catalysed reaction is L-glutamyl-tRNA(Gln) + L-glutamine + ATP + H2O = L-glutaminyl-tRNA(Gln) + L-glutamate + ADP + phosphate + H(+). The enzyme catalyses L-aspartyl-tRNA(Asn) + L-glutamine + ATP + H2O = L-asparaginyl-tRNA(Asn) + L-glutamate + ADP + phosphate + 2 H(+). Its function is as follows. Allows the formation of correctly charged Asn-tRNA(Asn) or Gln-tRNA(Gln) through the transamidation of misacylated Asp-tRNA(Asn) or Glu-tRNA(Gln) in organisms which lack either or both of asparaginyl-tRNA or glutaminyl-tRNA synthetases. The reaction takes place in the presence of glutamine and ATP through an activated phospho-Asp-tRNA(Asn) or phospho-Glu-tRNA(Gln). The polypeptide is Aspartyl/glutamyl-tRNA(Asn/Gln) amidotransferase subunit C (Mycobacterium leprae (strain Br4923)).